A 183-amino-acid chain; its full sequence is Small ribosomal subunit protein uS4c (183 aa).

The region spanning 82 to 143 (MRLDNILFRL…KQRSKALIQN (62 aa)) is the S4 RNA-binding domain.

It belongs to the universal ribosomal protein uS4 family. Part of the 30S ribosomal subunit. Contacts protein S5. The interaction surface between S4 and S5 is involved in control of translational fidelity.

It localises to the plastid. It is found in the chloroplast. One of the primary rRNA binding proteins, it binds directly to 16S rRNA where it nucleates assembly of the body of the 30S subunit. Its function is as follows. With S5 and S12 plays an important role in translational accuracy. This Sparaxis sp. (strain Lejeune 1997) protein is Small ribosomal subunit protein uS4c (rps4).